The following is a 204-amino-acid chain: MSFDNHLVPTVIEQSGRGERAFDIYSRLLKERIVFLVGPVTDESANLVVAQLLFLESENPDKDIFFYINSPGGSVTAGMSIYDTMNFIKPDVSTLCLGQAASMGAFLLSAGEKGKRFALPNSRIMIHQPLISGGLGGQASDIEIHARELLKIKEKLNRLMAKHCGRDLADLERDTDRDNFMSAEEAKEYGLIDQVLENRASLRL.

Ser102 functions as the Nucleophile in the catalytic mechanism. His127 is an active-site residue.

It belongs to the peptidase S14 family. As to quaternary structure, fourteen ClpP subunits assemble into 2 heptameric rings which stack back to back to give a disk-like structure with a central cavity, resembling the structure of eukaryotic proteasomes.

Its subcellular location is the cytoplasm. It catalyses the reaction Hydrolysis of proteins to small peptides in the presence of ATP and magnesium. alpha-casein is the usual test substrate. In the absence of ATP, only oligopeptides shorter than five residues are hydrolyzed (such as succinyl-Leu-Tyr-|-NHMec, and Leu-Tyr-Leu-|-Tyr-Trp, in which cleavage of the -Tyr-|-Leu- and -Tyr-|-Trp bonds also occurs).. In terms of biological role, cleaves peptides in various proteins in a process that requires ATP hydrolysis. Has a chymotrypsin-like activity. Plays a major role in the degradation of misfolded proteins. This Neisseria gonorrhoeae (strain ATCC 700825 / FA 1090) protein is ATP-dependent Clp protease proteolytic subunit.